The primary structure comprises 278 residues: S-methyl-5'-thioadenosine phosphorylase (278 aa).

Residues Ser13, 55-56, and 88-89 each bind phosphate; these read RH and TA. Met190 serves as a coordination point for substrate. Thr191 is a binding site for phosphate. 214–216 is a substrate binding site; the sequence is DYD.

Belongs to the PNP/MTAP phosphorylase family. MTAP subfamily. Homotrimer.

The protein resides in the cytoplasm. The protein localises to the nucleus. The catalysed reaction is S-methyl-5'-thioadenosine + phosphate = 5-(methylsulfanyl)-alpha-D-ribose 1-phosphate + adenine. Its pathway is amino-acid biosynthesis; L-methionine biosynthesis via salvage pathway; S-methyl-5-thio-alpha-D-ribose 1-phosphate from S-methyl-5'-thioadenosine (phosphorylase route): step 1/1. In terms of biological role, catalyzes the reversible phosphorylation of S-methyl-5'-thioadenosine (MTA) to adenine and 5-methylthioribose-1-phosphate. Involved in the breakdown of MTA, a major by-product of polyamine biosynthesis. Responsible for the first step in the methionine salvage pathway after MTA has been generated from S-adenosylmethionine. Has broad substrate specificity with 6-aminopurine nucleosides as preferred substrates. This chain is S-methyl-5'-thioadenosine phosphorylase, found in Anopheles gambiae (African malaria mosquito).